Here is a 413-residue protein sequence, read N- to C-terminus: RING-H2 finger protein ATL54 (413 aa).

Residues 83-103 form a helical membrane-spanning segment; it reads ISIITITGAVLAILLTGFFLV. Residues 177–219 form an RING-type; atypical zinc finger; it reads CPVCLNEFEEDESLRLLPKCNHAFHISCIDTWLSSHTNCPLCR. Disordered regions lie at residues 238–258 and 321–413; these read VTPGGSGSHLENDGVDEEDHG and THVE…VFPL. Residues 387–401 are compositionally biased toward low complexity; sequence SSSTLKTNGSSSSVS. A compositionally biased stretch (polar residues) spans 402 to 413; the sequence is CFNKNKSSVFPL.

Belongs to the RING-type zinc finger family. ATL subfamily.

It is found in the membrane. It catalyses the reaction S-ubiquitinyl-[E2 ubiquitin-conjugating enzyme]-L-cysteine + [acceptor protein]-L-lysine = [E2 ubiquitin-conjugating enzyme]-L-cysteine + N(6)-ubiquitinyl-[acceptor protein]-L-lysine.. Its pathway is protein modification; protein ubiquitination. In Arabidopsis thaliana (Mouse-ear cress), this protein is RING-H2 finger protein ATL54 (ATL54).